Reading from the N-terminus, the 238-residue chain is Cysteine-rich venom protein (238 aa).

The N-terminal stretch at 1–19 is a signal peptide; sequence MIAFIVLLSLAAVLQQSSG. One can recognise an SCP domain in the interval 38–164; it reads VDKHNALRRS…STKYLYVCQY (127 aa). 8 disulfides stabilise this stretch: Cys75-Cys153, Cys92-Cys165, Cys148-Cys162, Cys184-Cys191, Cys187-Cys196, Cys200-Cys233, Cys209-Cys227, and Cys218-Cys231. The ShKT domain maps to 200 to 233; that stretch reads CKYEDAFTNCNELAKETKCKTEWIKSKCPATCFC.

Belongs to the CRISP family. Expressed by the venom gland.

It localises to the secreted. Its function is as follows. Blocks olfactory (CNGA2) and retinal (CNGA1) CNG channel currents. Does not affect neither depolarization- nor caffeine-induced contraction of smooth muscle. This chain is Cysteine-rich venom protein, found in Drysdalia coronoides (White-lipped snake).